The chain runs to 283 residues: 4-diphosphocytidyl-2-C-methyl-D-erythritol kinase (283 aa).

K10 is a catalytic residue. 99–109 (PMGGGLGGGSS) serves as a coordination point for ATP. The active site involves D141.

Belongs to the GHMP kinase family. IspE subfamily. Homodimer.

The enzyme catalyses 4-CDP-2-C-methyl-D-erythritol + ATP = 4-CDP-2-C-methyl-D-erythritol 2-phosphate + ADP + H(+). It functions in the pathway isoprenoid biosynthesis; isopentenyl diphosphate biosynthesis via DXP pathway; isopentenyl diphosphate from 1-deoxy-D-xylulose 5-phosphate: step 3/6. Its function is as follows. Catalyzes the phosphorylation of the position 2 hydroxy group of 4-diphosphocytidyl-2C-methyl-D-erythritol. This Escherichia coli O127:H6 (strain E2348/69 / EPEC) protein is 4-diphosphocytidyl-2-C-methyl-D-erythritol kinase.